The primary structure comprises 225 residues: Ribonuclease 3 (225 aa).

One can recognise an RNase III domain in the interval 4 to 133; it reads FEKLETLLGY…LIAAIYLDSN (130 aa). Glutamate 46 lines the Mg(2+) pocket. Aspartate 50 is a catalytic residue. Residues asparagine 119 and glutamate 122 each coordinate Mg(2+). Glutamate 122 is a catalytic residue. Positions 158–225 constitute a DRBM domain; the sequence is DPKTALQEWA…AARSLLHRLK (68 aa).

It belongs to the ribonuclease III family. Homodimer. Mg(2+) serves as cofactor.

The protein resides in the cytoplasm. It carries out the reaction Endonucleolytic cleavage to 5'-phosphomonoester.. Its function is as follows. Digests double-stranded RNA. Involved in the processing of primary rRNA transcript to yield the immediate precursors to the large and small rRNAs (23S and 16S). Processes some mRNAs, and tRNAs when they are encoded in the rRNA operon. Processes pre-crRNA and tracrRNA of type II CRISPR loci if present in the organism. The chain is Ribonuclease 3 from Rickettsia prowazekii (strain Madrid E).